A 42-amino-acid chain; its full sequence is MQDVKTYLSTAPVLATLWFGFLAGLLIEINRFFPDALVLPFF.

The chain crosses the membrane as a helical span at residues 7-27 (YLSTAPVLATLWFGFLAGLLI).

It belongs to the PsaJ family.

Its subcellular location is the plastid. It localises to the chloroplast thylakoid membrane. In terms of biological role, may help in the organization of the PsaE and PsaF subunits. The protein is Photosystem I reaction center subunit IX of Marchantia polymorpha (Common liverwort).